We begin with the raw amino-acid sequence, 330 residues long: Phenylalanine--tRNA ligase alpha subunit (330 aa).

Glu-255 contributes to the Mg(2+) binding site.

The protein belongs to the class-II aminoacyl-tRNA synthetase family. Phe-tRNA synthetase alpha subunit type 1 subfamily. As to quaternary structure, tetramer of two alpha and two beta subunits. Mg(2+) is required as a cofactor.

The protein resides in the cytoplasm. It catalyses the reaction tRNA(Phe) + L-phenylalanine + ATP = L-phenylalanyl-tRNA(Phe) + AMP + diphosphate + H(+). This Acinetobacter baylyi (strain ATCC 33305 / BD413 / ADP1) protein is Phenylalanine--tRNA ligase alpha subunit.